The sequence spans 313 residues: Holliday junction branch migration complex subunit RuvB (313 aa).

Residues 1–157 are large ATPase domain (RuvB-L); the sequence is MNEYIGQGNI…FGLIMELDFY (157 aa). ATP-binding positions include Gly-38, Lys-41, Thr-42, Thr-43, 104–106, Arg-147, Tyr-157, and Arg-194; that span reads EDF. Residue Thr-42 coordinates Mg(2+). The segment at 158 to 228 is small ATPAse domain (RuvB-S); sequence SIDELSKIIE…MVEEIMFLLG (71 aa). The head domain (RuvB-H) stretch occupies residues 231-313; it reads KEGLDELDRK…KVQRGLFDEE (83 aa). Residues Arg-286 and Arg-291 each coordinate DNA.

The protein belongs to the RuvB family. As to quaternary structure, homohexamer. Forms an RuvA(8)-RuvB(12)-Holliday junction (HJ) complex. HJ DNA is sandwiched between 2 RuvA tetramers; dsDNA enters through RuvA and exits via RuvB. An RuvB hexamer assembles on each DNA strand where it exits the tetramer. Each RuvB hexamer is contacted by two RuvA subunits (via domain III) on 2 adjacent RuvB subunits; this complex drives branch migration. In the full resolvosome a probable DNA-RuvA(4)-RuvB(12)-RuvC(2) complex forms which resolves the HJ.

It is found in the cytoplasm. The enzyme catalyses ATP + H2O = ADP + phosphate + H(+). Functionally, the RuvA-RuvB-RuvC complex processes Holliday junction (HJ) DNA during genetic recombination and DNA repair, while the RuvA-RuvB complex plays an important role in the rescue of blocked DNA replication forks via replication fork reversal (RFR). RuvA specifically binds to HJ cruciform DNA, conferring on it an open structure. The RuvB hexamer acts as an ATP-dependent pump, pulling dsDNA into and through the RuvAB complex. RuvB forms 2 homohexamers on either side of HJ DNA bound by 1 or 2 RuvA tetramers; 4 subunits per hexamer contact DNA at a time. Coordinated motions by a converter formed by DNA-disengaged RuvB subunits stimulates ATP hydrolysis and nucleotide exchange. Immobilization of the converter enables RuvB to convert the ATP-contained energy into a lever motion, pulling 2 nucleotides of DNA out of the RuvA tetramer per ATP hydrolyzed, thus driving DNA branch migration. The RuvB motors rotate together with the DNA substrate, which together with the progressing nucleotide cycle form the mechanistic basis for DNA recombination by continuous HJ branch migration. Branch migration allows RuvC to scan DNA until it finds its consensus sequence, where it cleaves and resolves cruciform DNA. The protein is Holliday junction branch migration complex subunit RuvB of Thermosipho melanesiensis (strain DSM 12029 / CIP 104789 / BI429).